Here is a 137-residue protein sequence, read N- to C-terminus: Small ribosomal subunit protein uS11 (137 aa).

The segment covering 1–11 has biased composition (low complexity); it reads MAKQAKAGAAR. The disordered stretch occupies residues 1 to 32; sequence MAKQAKAGAARRPQRGRRRERKNVPRGQAHVQ. Residues 12 to 21 show a composition bias toward basic residues; the sequence is RPQRGRRRER.

This sequence belongs to the universal ribosomal protein uS11 family. In terms of assembly, part of the 30S ribosomal subunit. Interacts with proteins S7 and S18. Binds to IF-3.

Its function is as follows. Located on the platform of the 30S subunit, it bridges several disparate RNA helices of the 16S rRNA. Forms part of the Shine-Dalgarno cleft in the 70S ribosome. The polypeptide is Small ribosomal subunit protein uS11 (Herpetosiphon aurantiacus (strain ATCC 23779 / DSM 785 / 114-95)).